A 602-amino-acid polypeptide reads, in one-letter code: Gag-Pro polyprotein (602 aa).

Glycine 2 carries N-myristoyl glycine; by host lipidation. The short motif at 94–97 is the PTAP/PSAP motif element; that stretch reads PSAP. Residues 94–121 are disordered; sequence PSAPAAPVPTPICPTTTPPPPPPPSPEA. Residues 97–121 are compositionally biased toward pro residues; that stretch reads PAAPVPTPICPTTTPPPPPPPSPEA. The PPXY motif motif lies at 124–127; it reads PPPY. 2 CCHC-type zinc fingers span residues 361-378 and 384-401; these read QPCF…DCTQ and GPCP…DCPQ. A disordered region spans residues 399–425; the sequence is CPQLKPPQEEGEPLLLDLPSTSGTTEE. The Peptidase A2 domain maps to 473-551; the sequence is TQALLDTGAD…NKWTIIGRDA (79 aa). Aspartate 478 acts as the Protease; shared with dimeric partner in catalysis. A disordered region spans residues 582-602; that stretch reads EHLPPPPQVDQFPLNLSASRP.

As to quaternary structure, homodimer; the homodimers are part of the immature particles. Interacts with human TSG101 and NEDD4; these interactions are essential for budding and release of viral particles. Homodimer; further assembles as homohexamers. Specific enzymatic cleavages by the viral protease yield mature proteins. The polyprotein is cleaved during and after budding, this process is termed maturation. The protease is autoproteolytically processed at its N- and C-termini. Post-translationally, phosphorylation of the matrix protein p19 by MAPK1 seems to play a role in budding. In terms of processing, myristoylated. Myristoylation of the matrix (MA) domain mediates the transport and binding of Gag polyproteins to the host plasma membrane and is required for the assembly of viral particles.

Its subcellular location is the virion. The matrix domain targets Gag, Gag-Pro and Gag-Pro-Pol polyproteins to the plasma membrane via a multipartite membrane binding signal, that includes its myristoylated N-terminus. Functionally, matrix protein. Its function is as follows. Forms the spherical core of the virus that encapsulates the genomic RNA-nucleocapsid complex. In terms of biological role, binds strongly to viral nucleic acids and promote their aggregation. Also destabilizes the nucleic acids duplexes via highly structured zinc-binding motifs. The aspartyl protease mediates proteolytic cleavages of Gag and Gag-Pol polyproteins during or shortly after the release of the virion from the plasma membrane. Cleavages take place as an ordered, step-wise cascade to yield mature proteins. This process is called maturation. Displays maximal activity during the budding process just prior to particle release from the cell (Potential). Cleaves the translation initiation factor eIF4G leading to the inhibition of host cap-dependent translation. The polypeptide is Gag-Pro polyprotein (gag-pro) (Homo sapiens (Human)).